The sequence spans 512 residues: mRNA export factor (512 aa).

A compositionally biased stretch (low complexity) spans 1-15; sequence MATDIDMLIDLGLDL. The disordered stretch occupies residues 1–243; that stretch reads MATDIDMLID…APERKAPAAD (243 aa). The Nuclear export signal motif lies at 5–17; it reads IDMLIDLGLDLSD. Phosphoserine; by host occurs at positions 16 and 18. Acidic residues-rich tracts occupy residues 16–26 and 35–51; these read SDSDLDEDPPE and LESD…EDME. Residues 104-112 are interaction with host ALYREF; sequence VWSRLGARR. The short motif at 110-138 is the Nuclear localization signal element; sequence ARRPSCSPEQHGGKVARLQPPPTKAQPAR. Phosphoserine; by host is present on Ser-114. Arg-138 bears the Dimethylated arginine; by host mark. The interval 138 to 152 is RGG-box; it reads RGGRRGRRRGRGRGG. Positions 139–149 are enriched in basic residues; the sequence is GGRRGRRRGRG. Arg-148 is subject to Omega-N-methylarginine; by host. Arg-150 bears the Dimethylated arginine; by host mark. Positions 214-233 are enriched in pro residues; the sequence is APPPLMTLAIAPPPADPRAP. Positions 400, 479, 483, and 488 each coordinate Zn(2+). Residues 400-488 form a CHC2-type zinc finger; the sequence is CYLKARGLCG…HRQECSSRVC (89 aa). An important for homodimerization region spans residues 500–512; sequence YVHGKYFYCNSLF.

Belongs to the HHV-1 ICP27 protein family. In terms of assembly, homodimer. Interacts with host RBP1; this interaction facilitates the RNA polymerase recruitment to viral transcription sites. Interacts (via the RGG box) with host ALYREF/THOC4; this interaction recruits ALYREF to viral replication compartments and probably directs viral mRNA to the TAP/NFX1 pathway. Interacts with host ALYREF2. Interacts (via the RGG box) with host SRPK1; this interaction relocalizes SRPK1 to the nucleus and seems to alter its activity. Interacts with ICP4; this interaction modulates ICP4 DNA-binding activity. Interacts with host NXF1; this interaction allows efficient export of HHV-1 early and late transcripts. Post-translationally, methylated within the RGG box possibly by host PRMT1. When hypomethylated, ICP27 is exported to the cytoplasm earlier and more rapidly. In terms of processing, phosphorylated.

It localises to the host cytoplasm. The protein localises to the host nucleus. Its function is as follows. Multifunctional regulator of the expression of viral genes that contributes to the shutoff of host protein synthesis and mediates nuclear export of viral intronless mRNAs. Early in infection, this immediate early (EI) protein mediates the inhibition of cellular splicing. This results in the accumulation of unprocessed 3'end pre-mRNAs which can't be exported from the nucleus. Cellular protein synthesis is thereby shut off early after virus infection. Later in the infection, it helps recruit cellular RNA polymerase II to viral replication sites and promotes the nuclear export of viral intronless mRNAs by interacting with mRNAs and host NXF1/TAP. ICP27 binds to NUP62 which may provide facilitated viral mRNA export and may indirectly compete with some host cell transport receptors for binding and inhibit cellular nucleocytoplasmic transport pathways. Also stimulates translation of viral transcripts. Repression of host gene expression blocks the cell cycle at the G1 phase and prevents apoptosis. Seems to silence the 3' splice site of the promyelocytic leukemia (PML) intron 7a, thereby switching PML isoforms from PML-II to PML-V. This could be linked to the accelerated mRNA export induced by ICP27 which might not provide sufficient time for PML pre-mRNA to be spliced in the nucleus. This is mRNA export factor from Homo sapiens (Human).